The primary structure comprises 631 residues: 1-deoxy-D-xylulose-5-phosphate synthase (631 aa).

Thiamine diphosphate is bound by residues H73 and 114-116; that span reads SHA. D145 lines the Mg(2+) pocket. Thiamine diphosphate contacts are provided by residues 146-147, N175, Y286, and E368; that span reads GA. Position 175 (N175) interacts with Mg(2+).

The protein belongs to the transketolase family. DXPS subfamily. Homodimer. It depends on Mg(2+) as a cofactor. Thiamine diphosphate is required as a cofactor.

It carries out the reaction D-glyceraldehyde 3-phosphate + pyruvate + H(+) = 1-deoxy-D-xylulose 5-phosphate + CO2. Its pathway is metabolic intermediate biosynthesis; 1-deoxy-D-xylulose 5-phosphate biosynthesis; 1-deoxy-D-xylulose 5-phosphate from D-glyceraldehyde 3-phosphate and pyruvate: step 1/1. Its function is as follows. Catalyzes the acyloin condensation reaction between C atoms 2 and 3 of pyruvate and glyceraldehyde 3-phosphate to yield 1-deoxy-D-xylulose-5-phosphate (DXP). The protein is 1-deoxy-D-xylulose-5-phosphate synthase of Nocardia farcinica (strain IFM 10152).